The primary structure comprises 370 residues: GTPase Obg (370 aa).

An Obg domain is found at 1–159 (MKFIDEARIE…RMLRLELKVL (159 aa)). One can recognise an OBG-type G domain in the interval 160–334 (ADVGLLGMPN…LCYAIYDYLA (175 aa)). GTP contacts are provided by residues 166–173 (GMPNAGKS), 191–195 (FTTLA), 213–216 (DIPG), 284–287 (NKLD), and 315–317 (SAL). Mg(2+)-binding residues include serine 173 and threonine 193. Residues 344-370 (EEEDLATDVRFRDAPPADGGATPGDDA) are disordered.

It belongs to the TRAFAC class OBG-HflX-like GTPase superfamily. OBG GTPase family. In terms of assembly, monomer. The cofactor is Mg(2+).

It is found in the cytoplasm. An essential GTPase which binds GTP, GDP and possibly (p)ppGpp with moderate affinity, with high nucleotide exchange rates and a fairly low GTP hydrolysis rate. Plays a role in control of the cell cycle, stress response, ribosome biogenesis and in those bacteria that undergo differentiation, in morphogenesis control. The protein is GTPase Obg of Burkholderia ambifaria (strain ATCC BAA-244 / DSM 16087 / CCUG 44356 / LMG 19182 / AMMD) (Burkholderia cepacia (strain AMMD)).